Consider the following 303-residue polypeptide: Imidazoleglycerol-phosphate dehydratase (303 aa).

The protein belongs to the imidazoleglycerol-phosphate dehydratase family.

Its subcellular location is the cytoplasm. The enzyme catalyses D-erythro-1-(imidazol-4-yl)glycerol 3-phosphate = 3-(imidazol-4-yl)-2-oxopropyl phosphate + H2O. Its pathway is amino-acid biosynthesis; L-histidine biosynthesis; L-histidine from 5-phospho-alpha-D-ribose 1-diphosphate: step 6/9. This is Imidazoleglycerol-phosphate dehydratase from Neisseria gonorrhoeae (strain ATCC 700825 / FA 1090).